The sequence spans 269 residues: Formamidopyrimidine-DNA glycosylase (269 aa).

Pro2 functions as the Schiff-base intermediate with DNA in the catalytic mechanism. Catalysis depends on Glu3, which acts as the Proton donor. Lys57 acts as the Proton donor; for beta-elimination activity in catalysis. His90, Arg109, and Lys150 together coordinate DNA. The FPG-type zinc finger occupies 235–269 (QVYGRKGEPCRVCGTPIVATKHAQRATFYCRHCQK). The Proton donor; for delta-elimination activity role is filled by Arg259.

This sequence belongs to the FPG family. Monomer. Requires Zn(2+) as cofactor.

The catalysed reaction is Hydrolysis of DNA containing ring-opened 7-methylguanine residues, releasing 2,6-diamino-4-hydroxy-5-(N-methyl)formamidopyrimidine.. It catalyses the reaction 2'-deoxyribonucleotide-(2'-deoxyribose 5'-phosphate)-2'-deoxyribonucleotide-DNA = a 3'-end 2'-deoxyribonucleotide-(2,3-dehydro-2,3-deoxyribose 5'-phosphate)-DNA + a 5'-end 5'-phospho-2'-deoxyribonucleoside-DNA + H(+). Functionally, involved in base excision repair of DNA damaged by oxidation or by mutagenic agents. Acts as a DNA glycosylase that recognizes and removes damaged bases. Has a preference for oxidized purines, such as 7,8-dihydro-8-oxoguanine (8-oxoG). Has AP (apurinic/apyrimidinic) lyase activity and introduces nicks in the DNA strand. Cleaves the DNA backbone by beta-delta elimination to generate a single-strand break at the site of the removed base with both 3'- and 5'-phosphates. In Salmonella enteritidis PT4 (strain P125109), this protein is Formamidopyrimidine-DNA glycosylase.